Consider the following 858-residue polypeptide: Beta-galactosidase 6 (858 aa).

The signal sequence occupies residues Met1–Ala30. N-linked (GlcNAc...) asparagine glycosylation occurs at Asn32. The active-site Proton donor is the Glu189. The Nucleophile role is filled by Glu258. N-linked (GlcNAc...) asparagine glycosylation is found at Asn259, Asn482, Asn507, Asn595, and Asn830. Positions Gln772–Ser858 constitute an SUEL-type lectin domain.

It belongs to the glycosyl hydrolase 35 family.

It is found in the secreted. Its subcellular location is the extracellular space. The protein resides in the apoplast. The enzyme catalyses Hydrolysis of terminal non-reducing beta-D-galactose residues in beta-D-galactosides.. Functionally, releases galactose by hydrolysis of plant cell wall galactose-containing polysaccharides such as galacto-xyloglucan, pectic galactan and galactan (in vitro). The sequence is that of Beta-galactosidase 6 from Oryza sativa subsp. japonica (Rice).